The primary structure comprises 121 residues: U15-barytoxin-Tl1b (121 aa).

An N-terminal signal peptide occupies residues 1 to 16 (MKLFMVLVASFAFAVA). Cystine bridges form between C54–C72, C65–C78, C69–C119, and C71–C90.

Belongs to the neurotoxin 03 (Tx2) family. 03 subfamily. Expressed by the venom gland.

Its subcellular location is the secreted. Functionally, ion channel inhibitor. The protein is U15-barytoxin-Tl1b of Trittame loki (Brush-footed trapdoor spider).